A 267-amino-acid polypeptide reads, in one-letter code: Beta-lactamase OXA-5 (267 aa).

The N-terminal stretch at M1–S19 is a signal peptide. Catalysis depends on S67, which acts as the Acyl-ester intermediate. Position 70 is an N6-carboxylysine (K70). Residue K205–G207 coordinates substrate.

Belongs to the class-D beta-lactamase family.

It catalyses the reaction a beta-lactam + H2O = a substituted beta-amino acid. With respect to regulation, inhibited by clavulanic acid. Functionally, hydrolyzes both oxacillin and methicillin. This chain is Beta-lactamase OXA-5 (bla), found in Pseudomonas aeruginosa.